The following is a 240-amino-acid chain: ATP-dependent dethiobiotin synthetase BioD (240 aa).

Position 15–20 (15–20 (EIGKTF)) interacts with ATP. A Mg(2+)-binding site is contributed by Thr-19. Lys-40 is an active-site residue. ATP-binding positions include Asp-57, 118–121 (EGVG), and 178–179 (NR). Residues Asp-57 and Glu-118 each coordinate Mg(2+).

This sequence belongs to the dethiobiotin synthetase family. As to quaternary structure, homodimer. Mg(2+) is required as a cofactor.

The protein resides in the cytoplasm. It catalyses the reaction (7R,8S)-7,8-diammoniononanoate + CO2 + ATP = (4R,5S)-dethiobiotin + ADP + phosphate + 3 H(+). It participates in cofactor biosynthesis; biotin biosynthesis; biotin from 7,8-diaminononanoate: step 1/2. In terms of biological role, catalyzes a mechanistically unusual reaction, the ATP-dependent insertion of CO2 between the N7 and N8 nitrogen atoms of 7,8-diaminopelargonic acid (DAPA, also called 7,8-diammoniononanoate) to form a ureido ring. The polypeptide is ATP-dependent dethiobiotin synthetase BioD (Burkholderia pseudomallei (strain 1106a)).